A 273-amino-acid polypeptide reads, in one-letter code: Urease accessory protein UreD (273 aa).

The protein belongs to the UreD family. In terms of assembly, ureD, UreF and UreG form a complex that acts as a GTP-hydrolysis-dependent molecular chaperone, activating the urease apoprotein by helping to assemble the nickel containing metallocenter of UreC. The UreE protein probably delivers the nickel.

It localises to the cytoplasm. Its function is as follows. Required for maturation of urease via the functional incorporation of the urease nickel metallocenter. This is Urease accessory protein UreD from Rhizobium leguminosarum bv. viciae.